The sequence spans 593 residues: Proline dehydrogenase 1, mitochondrial (593 aa).

A disordered region spans residues 24–44 (PAAREQPAAGPGAEPVCGPAE). An N6-acetyllysine mark is found at lysine 368 and lysine 479.

Belongs to the proline oxidase family. FAD is required as a cofactor.

It is found in the mitochondrion matrix. The enzyme catalyses L-proline + a quinone = (S)-1-pyrroline-5-carboxylate + a quinol + H(+). Its pathway is amino-acid degradation; L-proline degradation into L-glutamate; L-glutamate from L-proline: step 1/2. In terms of biological role, converts proline to delta-1-pyrroline-5-carboxylate. This Bos taurus (Bovine) protein is Proline dehydrogenase 1, mitochondrial.